The sequence spans 412 residues: Sexual development regulator umv3 (412 aa).

A disordered region spans residues 1-197; it reads MSAQDDIDTG…PPLLSDLPRH (197 aa). Polar residues-rich tracts occupy residues 73 to 93 and 149 to 170; these read RANT…SASS and RQSA…PGST. Residues 171–181 show a composition bias toward basic and acidic residues; that stretch reads ENERVRMHDQR. A Velvet domain is found at 195–388; sequence PRHSTDNKTY…ARQGIQVPVR (194 aa).

Belongs to the velvet family. VelC subfamily.

The protein localises to the nucleus. Functionally, velvet-domain-containing protein not required for disease or sexual development on seedlings. The sequence is that of Sexual development regulator umv3 from Mycosarcoma maydis (Corn smut fungus).